The primary structure comprises 437 residues: tRNA-2-methylthio-N(6)-dimethylallyladenosine synthase (437 aa).

One can recognise an MTTase N-terminal domain in the interval 1-115 (MKVYIETMGC…ISQVIHKEKA (115 aa)). [4Fe-4S] cluster is bound by residues Cys10, Cys46, Cys78, Cys148, Cys152, and Cys155. Residues 134-367 (KKAQIRSLLN…QNRHKEILEE (234 aa)) form the Radical SAM core domain. Positions 370 to 436 (KLEVGKTHVV…KGRLMAATKG (67 aa)) constitute a TRAM domain.

The protein belongs to the methylthiotransferase family. MiaB subfamily. As to quaternary structure, monomer. The cofactor is [4Fe-4S] cluster.

The protein localises to the cytoplasm. It catalyses the reaction N(6)-dimethylallyladenosine(37) in tRNA + (sulfur carrier)-SH + AH2 + 2 S-adenosyl-L-methionine = 2-methylsulfanyl-N(6)-dimethylallyladenosine(37) in tRNA + (sulfur carrier)-H + 5'-deoxyadenosine + L-methionine + A + S-adenosyl-L-homocysteine + 2 H(+). Its function is as follows. Catalyzes the methylthiolation of N6-(dimethylallyl)adenosine (i(6)A), leading to the formation of 2-methylthio-N6-(dimethylallyl)adenosine (ms(2)i(6)A) at position 37 in tRNAs that read codons beginning with uridine. This Helicobacter pylori (strain ATCC 700392 / 26695) (Campylobacter pylori) protein is tRNA-2-methylthio-N(6)-dimethylallyladenosine synthase.